A 72-amino-acid polypeptide reads, in one-letter code: uncharacterized protein (72 aa).

This is an uncharacterized protein from Vaccinia virus (strain Western Reserve) (VACV).